Reading from the N-terminus, the 227-residue chain is Fibrillarin-like rRNA/tRNA 2'-O-methyltransferase (227 aa).

Residues 82-83, 100-101, 125-126, and 145-148 contribute to the S-adenosyl-L-methionine site; these read TT, EF, DA, and DVAQ.

This sequence belongs to the methyltransferase superfamily. Fibrillarin family. Interacts with nop5. Component of box C/D small ribonucleoprotein (sRNP) particles that contain rpl7ae, FlpA and nop5, plus a guide RNA.

Involved in pre-rRNA and tRNA processing. Utilizes the methyl donor S-adenosyl-L-methionine to catalyze the site-specific 2'-hydroxyl methylation of ribose moieties in rRNA and tRNA. Site specificity is provided by a guide RNA that base pairs with the substrate. Methylation occurs at a characteristic distance from the sequence involved in base pairing with the guide RNA. This is Fibrillarin-like rRNA/tRNA 2'-O-methyltransferase from Methanosarcina acetivorans (strain ATCC 35395 / DSM 2834 / JCM 12185 / C2A).